Reading from the N-terminus, the 315-residue chain is Lipoyl synthase (315 aa).

Residues 1–33 are disordered; that stretch reads MADMPPVLRHPEKAHRPDQPQPKKPDWIRVKAP. Positions 9-29 are enriched in basic and acidic residues; it reads RHPEKAHRPDQPQPKKPDWIR. Positions 54, 59, 65, 80, 84, 87, and 294 each coordinate [4Fe-4S] cluster. The Radical SAM core domain occupies 66-283; it reads WSQGHATMMI…EKAAYGKGFL (218 aa).

It belongs to the radical SAM superfamily. Lipoyl synthase family. Requires [4Fe-4S] cluster as cofactor.

Its subcellular location is the cytoplasm. The catalysed reaction is [[Fe-S] cluster scaffold protein carrying a second [4Fe-4S](2+) cluster] + N(6)-octanoyl-L-lysyl-[protein] + 2 oxidized [2Fe-2S]-[ferredoxin] + 2 S-adenosyl-L-methionine + 4 H(+) = [[Fe-S] cluster scaffold protein] + N(6)-[(R)-dihydrolipoyl]-L-lysyl-[protein] + 4 Fe(3+) + 2 hydrogen sulfide + 2 5'-deoxyadenosine + 2 L-methionine + 2 reduced [2Fe-2S]-[ferredoxin]. It participates in protein modification; protein lipoylation via endogenous pathway; protein N(6)-(lipoyl)lysine from octanoyl-[acyl-carrier-protein]: step 2/2. Catalyzes the radical-mediated insertion of two sulfur atoms into the C-6 and C-8 positions of the octanoyl moiety bound to the lipoyl domains of lipoate-dependent enzymes, thereby converting the octanoylated domains into lipoylated derivatives. This is Lipoyl synthase from Paracoccus denitrificans (strain Pd 1222).